The following is a 78-amino-acid chain: Large ribosomal subunit protein bL28 (78 aa).

This sequence belongs to the bacterial ribosomal protein bL28 family.

This is Large ribosomal subunit protein bL28 from Prochlorococcus marinus (strain MIT 9211).